We begin with the raw amino-acid sequence, 256 residues long: Hydroxyethylthiazole kinase (256 aa).

Met37 lines the substrate pocket. The ATP site is built by Lys113 and Thr159. Gly186 contacts substrate.

The protein belongs to the Thz kinase family. Mg(2+) serves as cofactor.

The catalysed reaction is 5-(2-hydroxyethyl)-4-methylthiazole + ATP = 4-methyl-5-(2-phosphooxyethyl)-thiazole + ADP + H(+). Its pathway is cofactor biosynthesis; thiamine diphosphate biosynthesis; 4-methyl-5-(2-phosphoethyl)-thiazole from 5-(2-hydroxyethyl)-4-methylthiazole: step 1/1. Its function is as follows. Catalyzes the phosphorylation of the hydroxyl group of 4-methyl-5-beta-hydroxyethylthiazole (THZ). The chain is Hydroxyethylthiazole kinase from Exiguobacterium sibiricum (strain DSM 17290 / CCUG 55495 / CIP 109462 / JCM 13490 / 255-15).